The chain runs to 100 residues: MIDTTWVIILSFLLFAIGTFGLLSRRNLLFILLSLEIMLNGIILLFIAASNLHGNNDGQIMYLLVLTLAASEVAVGLALVVQIYKQQQNLDVDTLTKLRG.

3 consecutive transmembrane segments (helical) span residues 4–24 (TTWV…GLLS), 28–48 (LLFI…LFIA), and 60–80 (IMYL…LALV).

It belongs to the complex I subunit 4L family. As to quaternary structure, NDH-1 is composed of 13 different subunits. Subunits NuoA, H, J, K, L, M, N constitute the membrane sector of the complex.

It localises to the cell inner membrane. It catalyses the reaction a quinone + NADH + 5 H(+)(in) = a quinol + NAD(+) + 4 H(+)(out). Functionally, NDH-1 shuttles electrons from NADH, via FMN and iron-sulfur (Fe-S) centers, to quinones in the respiratory chain. The immediate electron acceptor for the enzyme in this species is believed to be ubiquinone. Couples the redox reaction to proton translocation (for every two electrons transferred, four hydrogen ions are translocated across the cytoplasmic membrane), and thus conserves the redox energy in a proton gradient. In Shewanella woodyi (strain ATCC 51908 / MS32), this protein is NADH-quinone oxidoreductase subunit K.